A 590-amino-acid chain; its full sequence is DNA primase (590 aa).

A CHC2-type zinc finger spans residues 37–61 (CPFHKEKTPSFSVSPTKQFYHCFSC). The Toprim domain maps to 255–337 (GRILVVEGYM…DKSLHFLFLP (83 aa)). E261, D305, and D307 together coordinate Mg(2+).

This sequence belongs to the DnaG primase family. In terms of assembly, monomer. Interacts with DnaB. Zn(2+) is required as a cofactor. It depends on Mg(2+) as a cofactor.

The catalysed reaction is ssDNA + n NTP = ssDNA/pppN(pN)n-1 hybrid + (n-1) diphosphate.. Functionally, RNA polymerase that catalyzes the synthesis of short RNA molecules used as primers for DNA polymerase during DNA replication. The protein is DNA primase of Neisseria meningitidis serogroup B (strain ATCC BAA-335 / MC58).